Here is a 196-residue protein sequence, read N- to C-terminus: ATP-dependent Clp protease proteolytic subunit 1 (196 aa).

S96 serves as the catalytic Nucleophile. H121 is an active-site residue.

This sequence belongs to the peptidase S14 family. As to quaternary structure, fourteen ClpP subunits assemble into 2 heptameric rings which stack back to back to give a disk-like structure with a central cavity, resembling the structure of eukaryotic proteasomes.

It localises to the cytoplasm. It catalyses the reaction Hydrolysis of proteins to small peptides in the presence of ATP and magnesium. alpha-casein is the usual test substrate. In the absence of ATP, only oligopeptides shorter than five residues are hydrolyzed (such as succinyl-Leu-Tyr-|-NHMec, and Leu-Tyr-Leu-|-Tyr-Trp, in which cleavage of the -Tyr-|-Leu- and -Tyr-|-Trp bonds also occurs).. Its function is as follows. Cleaves peptides in various proteins in a process that requires ATP hydrolysis. Has a chymotrypsin-like activity. Plays a major role in the degradation of misfolded proteins. In Prochlorococcus marinus (strain NATL2A), this protein is ATP-dependent Clp protease proteolytic subunit 1.